Reading from the N-terminus, the 420-residue chain is RING finger protein 39 (420 aa).

Residues 88–135 form an RING-type zinc finger; that stretch reads CPLCGGSFEDPVLLACEHSFCRACLARRWGTPPATGTEASPTACPCCG. Residues 210–420 form the B30.2/SPRY domain; that stretch reads DDLPEDYPVV…APLRIVPAES (211 aa).

As to expression, expressed in testis.

The protein localises to the cytoplasm. The enzyme catalyses S-ubiquitinyl-[E2 ubiquitin-conjugating enzyme]-L-cysteine + [acceptor protein]-L-lysine = [E2 ubiquitin-conjugating enzyme]-L-cysteine + N(6)-ubiquitinyl-[acceptor protein]-L-lysine.. The protein operates within protein modification; protein ubiquitination. In terms of biological role, plays an inhibitory role in anti-RNA viral innate immunity by targeting the adapter DDX3X and promoting its 'Lys-48'-linked polyubiquitination. Alternatively, enhances the cGAS-STING pathway activation by promoting 'Lys-63'-linked ubiquitination of STING1, facilitating the STING1-TBK1 complex formation and STING1 activation. (Microbial infection) Plays a positive role in human immunodeficiency virus (HIV-1) replication. The protein is RING finger protein 39 (RNF39) of Homo sapiens (Human).